Reading from the N-terminus, the 336-residue chain is DNA-directed RNA polymerase subunit alpha (336 aa).

The tract at residues 1 to 232 (MIQKNWQELI…DQLGVFVNFD (232 aa)) is alpha N-terminal domain (alpha-NTD). Positions 248–336 (FNPALLKKVD…DLAKRYEDQY (89 aa)) are alpha C-terminal domain (alpha-CTD).

It belongs to the RNA polymerase alpha chain family. In terms of assembly, homodimer. The RNAP catalytic core consists of 2 alpha, 1 beta, 1 beta' and 1 omega subunit. When a sigma factor is associated with the core the holoenzyme is formed, which can initiate transcription.

The catalysed reaction is RNA(n) + a ribonucleoside 5'-triphosphate = RNA(n+1) + diphosphate. In terms of biological role, DNA-dependent RNA polymerase catalyzes the transcription of DNA into RNA using the four ribonucleoside triphosphates as substrates. In Rhizobium etli (strain CIAT 652), this protein is DNA-directed RNA polymerase subunit alpha.